A 157-amino-acid chain; its full sequence is Snaclec EMS16 subunit alpha (157 aa).

The first 23 residues, 1–23, serve as a signal peptide directing secretion; that stretch reads MGRFISVSFGLLVVFLSLSGTGA. Disulfide bonds link Cys-27–Cys-38, Cys-55–Cys-152, and Cys-127–Cys-144. A C-type lectin domain is found at 34–153; the sequence is YDQHCYLAIG…CEDLYPFVCK (120 aa).

This sequence belongs to the snaclec family. Heterodimer of subunits A and B; disulfide-linked. As to expression, expressed by the venom gland.

Its subcellular location is the secreted. EMS16 is a potent and selective inhibitor of alpha-2/beta-1 (ITGA2/ITGB1) integrin and acts as a potent antagonist of platelet aggregation and cell migration. Binds specifically to the I domain of the alpha-2 subunit, in a metal ion-independent fashion. The chain is Snaclec EMS16 subunit alpha from Echis multisquamatus (Central Asian sand viper).